The chain runs to 930 residues: Translation initiation factor IF-2 (930 aa).

The span at 50 to 67 shows a compositional bias: low complexity; that stretch reads FKPAAAPKVEAKPAAPKV. Disordered stretches follow at residues 50–195 and 260–346; these read FKPA…PRID and EVVP…HELP. Basic and acidic residues-rich tracts occupy residues 68 to 90 and 110 to 125; these read SAEKKTEKSEPAKPAVAKEEAKP and FKAEREARAKEQAERR. The span at 129-141 shows a compositional bias: low complexity; the sequence is KGNNRDQQQNGNR. Basic and acidic residues-rich tracts occupy residues 157 to 167 and 262 to 295; these read RDNRRFNDQAK and VPEKKEPAVDTRRKKQARPDKNRDDYDHEEDGPR. A compositionally biased stretch (low complexity) spans 309 to 318; that stretch reads NQKNSNWNNN. Basic and acidic residues predominate over residues 337 to 346; it reads VTERKFHELP. Residues 432–599 enclose the tr-type G domain; that stretch reads ERPPVVTIMG…TVLLVAEIQE (168 aa). Positions 441 to 448 are G1; the sequence is GHVDHGKT. 441–448 lines the GTP pocket; that stretch reads GHVDHGKT. Residues 466–470 form a G2 region; sequence GITQH. The segment at 487–490 is G3; that stretch reads DTPG. GTP is bound by residues 487–491 and 541–544; these read DTPGH and NKID. The tract at residues 541–544 is G4; the sequence is NKID. Positions 577 to 579 are G5; that stretch reads SAK.

Belongs to the TRAFAC class translation factor GTPase superfamily. Classic translation factor GTPase family. IF-2 subfamily.

It is found in the cytoplasm. In terms of biological role, one of the essential components for the initiation of protein synthesis. Protects formylmethionyl-tRNA from spontaneous hydrolysis and promotes its binding to the 30S ribosomal subunits. Also involved in the hydrolysis of GTP during the formation of the 70S ribosomal complex. In Streptococcus pneumoniae (strain Hungary19A-6), this protein is Translation initiation factor IF-2.